Here is a 339-residue protein sequence, read N- to C-terminus: MKKILVTGGTGFIGSHTVVSLLKSGHQVVILDNLCNSSINILPRLKTITGQEIPFYQGDIRDREILRRIFAENRIDSVIHFAGLKAVGESVAEPMKYYDNNVSGSLVLAEEMARAGVFKIVFSSSATVYGDPGKVPYTEDMQPGDTTSPYGTSKSMVERILSDIQKADPRWSVILLRYFNPIGAHESGLIGEQPNGIPNNLLPYICQVAAGKLPQLAVFGGDYPTPDGTGMRDYIHVMDLAEGHVAAMQAKSNVAGTHLLNLGSGRASSVLEIIRAFEAASGLTIPYEVKPRRAGDLACFYADPSYAKAQIGWQTQRDLTQMMEDSWRWVSNNPNGYDD.

NAD(+)-binding positions include 12–13 (FI), 32–37 (DNLCNS), 59–60 (DI), 81–85 (FAGLK), asparagine 100, serine 125, tyrosine 150, lysine 154, and phenylalanine 179. Substrate is bound by residues serine 125 and tyrosine 150. Tyrosine 150 acts as the Proton acceptor in catalysis. Substrate contacts are provided by residues asparagine 180, 200–201 (NL), 217–219 (AVF), arginine 232, and 293–296 (RAGD).

It belongs to the NAD(P)-dependent epimerase/dehydratase family. As to quaternary structure, homodimer. It depends on NAD(+) as a cofactor.

It carries out the reaction UDP-alpha-D-glucose = UDP-alpha-D-galactose. It functions in the pathway carbohydrate metabolism; galactose metabolism. Involved in the metabolism of galactose. Plays an essential role in the incorporation of galactose into meningococcal lipopolysaccharide surface molecules, which are important for pathogenesis. Catalyzes the conversion of UDP-galactose (UDP-Gal) to UDP-glucose (UDP-Glc) through a mechanism involving the transient reduction of NAD. The polypeptide is UDP-glucose 4-epimerase (galE) (Neisseria meningitidis serogroup C).